The chain runs to 712 residues: Polyribonucleotide nucleotidyltransferase (712 aa).

Positions 487 and 493 each coordinate Mg(2+). Positions 554-613 constitute a KH domain; the sequence is PKIITMTINPDKIRDVIGPSGKQINKIIEETGVKIDIEQDGTVFISSINQEMNDKAKKII. The S1 motif domain maps to 623-691; the sequence is GEIYEGKVKR…KQGRVNLSRK (69 aa).

It belongs to the polyribonucleotide nucleotidyltransferase family. It depends on Mg(2+) as a cofactor.

It localises to the cytoplasm. It carries out the reaction RNA(n+1) + phosphate = RNA(n) + a ribonucleoside 5'-diphosphate. Its function is as follows. Involved in mRNA degradation. Catalyzes the phosphorolysis of single-stranded polyribonucleotides processively in the 3'- to 5'-direction. The protein is Polyribonucleotide nucleotidyltransferase of Bacillus cereus (strain AH187).